Consider the following 362-residue polypeptide: dTDP-glucose 4,6-dehydratase (362 aa).

NAD(+) is bound by residues 11 to 12 (FI), 32 to 35 (DKLT), 58 to 59 (DI), 80 to 84 (LAAES), and T99. Substrate is bound at residue S84. T133 is a substrate binding site. The active-site Proton donor is D134. Catalysis depends on proton acceptor residues E135 and Y167. Residue 167 to 171 (YSASK) coordinates NAD(+). N196 is a substrate binding site. N197 lines the NAD(+) pocket. Substrate-binding positions include 206 to 207 (KL), 222 to 224 (PVY), R231, N266, and 300 to 304 (DRPGH).

This sequence belongs to the NAD(P)-dependent epimerase/dehydratase family. dTDP-glucose dehydratase subfamily. NAD(+) is required as a cofactor.

The enzyme catalyses dTDP-alpha-D-glucose = dTDP-4-dehydro-6-deoxy-alpha-D-glucose + H2O. It functions in the pathway bacterial outer membrane biogenesis; LPS O-antigen biosynthesis. In terms of biological role, catalyzes the dehydration of dTDP-D-glucose to form dTDP-4-dehydro-6-deoxy-D-glucose via a three-step process involving oxidation, dehydration and reduction. This reaction is a step in the biosynthesis of D-fucofuranose, a component of E.coli O52 O antigen. This is dTDP-glucose 4,6-dehydratase (rmlB) from Escherichia coli.